A 409-amino-acid polypeptide reads, in one-letter code: Probable sodium/metabolite cotransporter BASS6, chloroplastic (409 aa).

Residues 1-49 constitute a chloroplast transit peptide; the sequence is MSVITTPIETLHLKSTLRLLPRAVYRSQRIQVFPPNIFSNTSLSSPLRI. 9 helical membrane-spanning segments follow: residues 100–120, 121–141, 170–190, 191–211, 221–241, 253–273, 285–305, 316–336, and 381–401; these read ILPH…PSFT, WFTS…VGIN, VLGF…TPIG, AGIM…ATFL, IVMT…LSLL, GMIS…LLLN, PFLP…PLAL, ATIL…GYFL, and IPPA…VLIW.

This sequence belongs to the bile acid:sodium symporter (BASS) (TC 2.A.28) family.

It localises to the membrane. Its subcellular location is the plastid. The protein localises to the chloroplast envelope. Functionally, may function as sodium-coupled metabolite transporter across the chloroplast envelope. The protein is Probable sodium/metabolite cotransporter BASS6, chloroplastic (BASS6) of Arabidopsis thaliana (Mouse-ear cress).